A 562-amino-acid polypeptide reads, in one-letter code: Chaperonin GroEL 1 (562 aa).

Residues 30–33 (TLGP), lysine 51, 87–91 (DGTTT), glycine 415, 478–480 (NAA), and aspartate 494 contribute to the ATP site.

Belongs to the chaperonin (HSP60) family. Forms a cylinder of 14 subunits composed of two heptameric rings stacked back-to-back. Interacts with the co-chaperonin GroES.

The protein resides in the cytoplasm. The enzyme catalyses ATP + H2O + a folded polypeptide = ADP + phosphate + an unfolded polypeptide.. In terms of biological role, together with its co-chaperonin GroES, plays an essential role in assisting protein folding. The GroEL-GroES system forms a nano-cage that allows encapsulation of the non-native substrate proteins and provides a physical environment optimized to promote and accelerate protein folding. This is Chaperonin GroEL 1 from Sorangium cellulosum (strain So ce56) (Polyangium cellulosum (strain So ce56)).